A 423-amino-acid chain; its full sequence is UDP-N-acetylglucosamine 1-carboxyvinyltransferase 1 (423 aa).

23 to 24 (KN) contacts phosphoenolpyruvate. UDP-N-acetyl-alpha-D-glucosamine is bound at residue R96. Residue C120 is the Proton donor of the active site. Residue C120 is modified to 2-(S-cysteinyl)pyruvic acid O-phosphothioketal. 2 residues coordinate UDP-N-acetyl-alpha-D-glucosamine: D309 and V331.

Belongs to the EPSP synthase family. MurA subfamily.

The protein localises to the cytoplasm. The catalysed reaction is phosphoenolpyruvate + UDP-N-acetyl-alpha-D-glucosamine = UDP-N-acetyl-3-O-(1-carboxyvinyl)-alpha-D-glucosamine + phosphate. It participates in cell wall biogenesis; peptidoglycan biosynthesis. Its function is as follows. Cell wall formation. Adds enolpyruvyl to UDP-N-acetylglucosamine. The sequence is that of UDP-N-acetylglucosamine 1-carboxyvinyltransferase 1 from Streptococcus pyogenes serotype M3 (strain ATCC BAA-595 / MGAS315).